The chain runs to 115 residues: NADH-ubiquinone oxidoreductase chain 3 (115 aa).

3 helical membrane-spanning segments follow: residues Ile-4–Leu-24, Phe-55–Ile-75, and Thr-86–Trp-106.

This sequence belongs to the complex I subunit 3 family. As to quaternary structure, core subunit of respiratory chain NADH dehydrogenase (Complex I) which is composed of 45 different subunits. Interacts with TMEM186. Interacts with TMEM242.

The protein resides in the mitochondrion inner membrane. It catalyses the reaction a ubiquinone + NADH + 5 H(+)(in) = a ubiquinol + NAD(+) + 4 H(+)(out). Functionally, core subunit of the mitochondrial membrane respiratory chain NADH dehydrogenase (Complex I) which catalyzes electron transfer from NADH through the respiratory chain, using ubiquinone as an electron acceptor. Essential for the catalytic activity of complex I. This chain is NADH-ubiquinone oxidoreductase chain 3, found in Baiomys taylori (Northern pygmy mouse).